Consider the following 401-residue polypeptide: All trans-polyprenyl-diphosphate synthase PDSS2 (401 aa).

The protein belongs to the FPP/GGPP synthase family. Heterotetramer composed of 2 PDSS1/DPS1 and 2 PDSS2/DLP1 subunits.

Its subcellular location is the mitochondrion. The enzyme catalyses 7 isopentenyl diphosphate + (2E,6E)-farnesyl diphosphate = all-trans-decaprenyl diphosphate + 7 diphosphate. It carries out the reaction 6 isopentenyl diphosphate + (2E,6E)-farnesyl diphosphate = all-trans-nonaprenyl diphosphate + 6 diphosphate. It functions in the pathway cofactor biosynthesis; ubiquinone biosynthesis. Functionally, heterotetrameric enzyme that catalyzes the condensation of farnesyl diphosphate (FPP), which acts as a primer, and isopentenyl diphosphate (IPP) to produce prenyl diphosphates of varying chain lengths and participates in the determination of the side chain of ubiquinone. Supplies nona and decaprenyl diphosphate, the precursors for the side chain of the isoprenoid quinones ubiquinone-9 (Q9) and ubiquinone-10 (Q10) respectively. The enzyme adds isopentenyl diphosphate molecules sequentially to farnesyl diphosphate with trans stereochemistry. May play a role during cerebellar development. May regulate mitochondrial respiratory chain function. The sequence is that of All trans-polyprenyl-diphosphate synthase PDSS2 from Mus musculus (Mouse).